Here is a 383-residue protein sequence, read N- to C-terminus: Ribosomal RNA large subunit methyltransferase G (383 aa).

Belongs to the methyltransferase superfamily. RlmG family.

The protein resides in the cytoplasm. The enzyme catalyses guanosine(1835) in 23S rRNA + S-adenosyl-L-methionine = N(2)-methylguanosine(1835) in 23S rRNA + S-adenosyl-L-homocysteine + H(+). In terms of biological role, specifically methylates the guanine in position 1835 (m2G1835) of 23S rRNA. The polypeptide is Ribosomal RNA large subunit methyltransferase G (Shewanella denitrificans (strain OS217 / ATCC BAA-1090 / DSM 15013)).